The sequence spans 227 residues: ATP-dependent dethiobiotin synthetase BioD (227 aa).

Residue 13-18 participates in ATP binding; sequence NIGKTI. Position 17 (threonine 17) interacts with Mg(2+). Residue lysine 38 is part of the active site. Serine 42 is a substrate binding site. Residues aspartate 55, 117-120, 177-178, 206-208, and asparagine 213 each bind ATP; these read EGFG, NH, and PFI. Residues aspartate 55 and glutamate 117 each contribute to the Mg(2+) site.

This sequence belongs to the dethiobiotin synthetase family. In terms of assembly, homodimer. The cofactor is Mg(2+).

The protein localises to the cytoplasm. The catalysed reaction is (7R,8S)-7,8-diammoniononanoate + CO2 + ATP = (4R,5S)-dethiobiotin + ADP + phosphate + 3 H(+). The protein operates within cofactor biosynthesis; biotin biosynthesis; biotin from 7,8-diaminononanoate: step 1/2. Catalyzes a mechanistically unusual reaction, the ATP-dependent insertion of CO2 between the N7 and N8 nitrogen atoms of 7,8-diaminopelargonic acid (DAPA, also called 7,8-diammoniononanoate) to form a ureido ring. The sequence is that of ATP-dependent dethiobiotin synthetase BioD from Wigglesworthia glossinidia brevipalpis.